The primary structure comprises 366 residues: MSFTRKKGFYKQDVNKTAWELPKTYVSLTHIGSGAYGSVCSAIDKRSGEKVAIKKLSRPFQSEIFAKRAYRELLLLKHMQHENVIGLLDVFTPASSLRNFHDFYLVMPFMQTDLQKIMGMEFSEDKIQYLVYQMLKGLKYIHSAGVVHRDLKPGNLAVNEDCELKILDFGLARHTDVEMTGYVVTRWYRAPEVILSWMHYNQTVDIWSVGCIMAEMLTGKTLFKGKDYLDQLTQILKVTGVPGAEFVQKLNDKAAKSYIQSLPQSPKKDFSQLFPRASPQATDLLEKMLELDVDKRLTASQALAHPFFEPFRDPEEETEAQQPLEDSLEREKLIVDEWKQHIYKEIVNFSPIARKDSRRRSGMKLQ.

Positions 25–308 (YVSLTHIGSG…ASQALAHPFF (284 aa)) constitute a Protein kinase domain. 31 to 39 (IGSGAYGSV) is a binding site for ATP. A Phosphoserine modification is found at S47. K54 contributes to the ATP binding site. D150 (proton acceptor) is an active-site residue. Position 180 is a phosphothreonine; by MAP2K3, MAP2K4, MAP2K6 and MAP2K7 (T180). A TXY motif is present at residues 180-182 (TGY). Y182 carries the phosphotyrosine; by MAP2K3, MAP2K4, MAP2K6 and MAP2K7 modification. The residue at position 350 (S350) is a Phosphoserine.

It belongs to the protein kinase superfamily. CMGC Ser/Thr protein kinase family. MAP kinase subfamily. As to quaternary structure, interacts with MAPK8IP2. The cofactor is Mg(2+). Post-translationally, dually phosphorylated on Thr-180 and Tyr-182 by MAP2K3/MKK3, MAP2K4/MKK4, MAP2K6/MKK6 and MAP2K7/MKK7, which activates the enzyme. Dephosphorylated by dual specificity phosphatase DUSP1.

The catalysed reaction is L-seryl-[protein] + ATP = O-phospho-L-seryl-[protein] + ADP + H(+). It carries out the reaction L-threonyl-[protein] + ATP = O-phospho-L-threonyl-[protein] + ADP + H(+). Activated by phosphorylation on threonine and tyrosine by dual specificity kinases, MAP2K3/MKK3 MAP2K6/MKK6, MAP2K4/MKK4 and MAP2K7/MKK7. Activation by ultraviolet radiation, hyperosmotic shock, anisomycin or by TNF-alpha is mediated by MAP2K3/MKK3. Inhibited by dual specificity phosphatase DUSP1. In terms of biological role, serine/threonine kinase which acts as an essential component of the MAP kinase signal transduction pathway. MAPK13 is one of the four p38 MAPKs which play an important role in the cascades of cellular responses evoked by extracellular stimuli such as pro-inflammatory cytokines or physical stress leading to direct activation of transcription factors such as ELK1 and ATF2. Accordingly, p38 MAPKs phosphorylate a broad range of proteins and it has been estimated that they may have approximately 200 to 300 substrates each. MAPK13 is one of the less studied p38 MAPK isoforms. Some of the targets are downstream kinases such as MAPKAPK2, which are activated through phosphorylation and further phosphorylate additional targets. Plays a role in the regulation of protein translation by phosphorylating and inactivating EEF2K. Involved in cytoskeletal remodeling through phosphorylation of MAPT and STMN1. Mediates UV irradiation induced up-regulation of the gene expression of CXCL14. Plays an important role in the regulation of epidermal keratinocyte differentiation, apoptosis and skin tumor development. Phosphorylates the transcriptional activator MYB in response to stress which leads to rapid MYB degradation via a proteasome-dependent pathway. MAPK13 also phosphorylates and down-regulates PRKD1 during regulation of insulin secretion in pancreatic beta cells. The protein is Mitogen-activated protein kinase 13 (MAPK13) of Bos taurus (Bovine).